The chain runs to 176 residues: Dual-action ribosomal maturation protein DarP (176 aa).

This sequence belongs to the DarP family.

Its subcellular location is the cytoplasm. In terms of biological role, member of a network of 50S ribosomal subunit biogenesis factors which assembles along the 30S-50S interface, preventing incorrect 23S rRNA structures from forming. Promotes peptidyl transferase center (PTC) maturation. This chain is Dual-action ribosomal maturation protein DarP, found in Aliivibrio fischeri (strain MJ11) (Vibrio fischeri).